The sequence spans 101 residues: uncharacterized protein (101 aa).

This is an uncharacterized protein from Cupriavidus necator (strain ATCC 17699 / DSM 428 / KCTC 22496 / NCIMB 10442 / H16 / Stanier 337) (Ralstonia eutropha).